Here is a 156-residue protein sequence, read N- to C-terminus: D-aminoacyl-tRNA deacylase (156 aa).

The Gly-cisPro motif, important for rejection of L-amino acids signature appears at 137–138 (GP).

This sequence belongs to the DTD family. In terms of assembly, homodimer.

It is found in the cytoplasm. It catalyses the reaction glycyl-tRNA(Ala) + H2O = tRNA(Ala) + glycine + H(+). It carries out the reaction a D-aminoacyl-tRNA + H2O = a tRNA + a D-alpha-amino acid + H(+). Functionally, an aminoacyl-tRNA editing enzyme that deacylates mischarged D-aminoacyl-tRNAs. Also deacylates mischarged glycyl-tRNA(Ala), protecting cells against glycine mischarging by AlaRS. Acts via tRNA-based rather than protein-based catalysis; rejects L-amino acids rather than detecting D-amino acids in the active site. By recycling D-aminoacyl-tRNA to D-amino acids and free tRNA molecules, this enzyme counteracts the toxicity associated with the formation of D-aminoacyl-tRNA entities in vivo and helps enforce protein L-homochirality. The chain is D-aminoacyl-tRNA deacylase from Dictyoglomus turgidum (strain DSM 6724 / Z-1310).